Here is a 951-residue protein sequence, read N- to C-terminus: Serine/threonine-protein phosphatase 4 regulatory subunit 1 (951 aa).

HEAT repeat units lie at residues 26–63, 65–81, 82–119, 127–164, 168–206, 208–246, 248–285, and 287–324; these read ESDV…VFNR, MVAR…CDDE, RDCI…FCQE, AFSK…QELI, DVET…MVGK, ITER…VVGQ, ATEE…ATCQ, and IRRT…TFAN. 3 disordered regions span residues 325-377, 411-451, and 474-499; these read PSSS…HSSA, SESP…PLDQ, and QQDP…GPPN. A compositionally biased stretch (basic and acidic residues) spans 332 to 365; the sequence is FKDESKSSEDSSAEDKDRMRDNDVVEEEHRRPED. Composition is skewed to polar residues over residues 411–421 and 430–445; these read SESPQEAASND and NSKS…SSPE. The segment covering 474–487 has biased composition (basic and acidic residues); it reads QQDPEERLSPERTG. An HEAT 9 repeat occupies 506–543; sequence KELEEMIENLEPHMDDPDVKAQVDVLSAALRASSLDAH. Residues 590–612 are disordered; the sequence is DYVHGGADVSPGDGFSPDEDRRP. HEAT repeat units lie at residues 699–735, 800–838, and 862–899; these read LTAA…LLHI, WISY…RCPK, and QFAV…EKEY. Position 936 is a phosphoserine (Ser936).

As to quaternary structure, serine/threonine-protein phosphatase 4 (PP4) occurs in different assemblies of the catalytic and one or more regulatory subunits. Component of the PP4 complex PPP4C-PPP4R1. Interacts with HDAC3.

Functionally, regulatory subunit of serine/threonine-protein phosphatase 4. May play a role in regulation of cell division in renal glomeruli. The PPP4C-PPP4R1 PP4 complex may play a role in dephosphorylation and regulation of HDAC3. Plays a role in the inhibition of TNF-induced NF-kappa-B activation by regulating the dephosphorylation of TRAF2. This is Serine/threonine-protein phosphatase 4 regulatory subunit 1 (Ppp4r1) from Mus musculus (Mouse).